A 130-amino-acid chain; its full sequence is Small ribosomal subunit protein uS9 (130 aa).

The disordered stretch occupies residues 109–130 (RKKERKKYGQRAARARFQYSKR).

Belongs to the universal ribosomal protein uS9 family.

The polypeptide is Small ribosomal subunit protein uS9 (Oleidesulfovibrio alaskensis (strain ATCC BAA-1058 / DSM 17464 / G20) (Desulfovibrio alaskensis)).